Consider the following 184-residue polypeptide: MAFLKDLYKNKVAKDLQKEFAYSSVMQIPKIEKVVINAGIGNAVADKKHLEAAISELTLITGQRPVETKAKKSIATFKLRAGQSIGAKVTLRGDRMWAFIETLFNIALPRVRDFKGISNNSFDDQGNYTLGIKEQIIFPQVVYDDVKSVRGFDVTFVTTAKTAQEAKALLVGLGAPFQKVRGDK.

It belongs to the universal ribosomal protein uL5 family. In terms of assembly, part of the 50S ribosomal subunit; part of the 5S rRNA/L5/L18/L25 subcomplex. Contacts the 5S rRNA and the P site tRNA. Forms a bridge to the 30S subunit in the 70S ribosome.

In terms of biological role, this is one of the proteins that bind and probably mediate the attachment of the 5S RNA into the large ribosomal subunit, where it forms part of the central protuberance. In the 70S ribosome it contacts protein S13 of the 30S subunit (bridge B1b), connecting the 2 subunits; this bridge is implicated in subunit movement. Contacts the P site tRNA; the 5S rRNA and some of its associated proteins might help stabilize positioning of ribosome-bound tRNAs. This is Large ribosomal subunit protein uL5 from Ureaplasma urealyticum serovar 10 (strain ATCC 33699 / Western).